A 550-amino-acid chain; its full sequence is Beta-fructofuranosidase, insoluble isoenzyme CWINV6 (550 aa).

Residues 28 to 31, Gln-47, 92 to 93, 157 to 158, and Glu-214 each bind substrate; these read WLND, WS, and RD. Asp-31 is a catalytic residue. N-linked (GlcNAc...) asparagine glycosylation is found at Asn-235 and Asn-272.

Belongs to the glycosyl hydrolase 32 family. As to expression, expressed in seedlings and leaves, and, to a lower extent, in flowers and seeds.

Its subcellular location is the secreted. It localises to the extracellular space. The protein resides in the apoplast. The protein localises to the cell wall. It carries out the reaction Hydrolysis of terminal, non-reducing (2-&gt;1)- and (2-&gt;6)-linked beta-D-fructofuranose residues in fructans.. In terms of biological role, 6 and 1-fructan exohydrolase that can degrade both inulin and levan-type fructans, such as phlein, levan, neokestose, levanbiose, 6-kestose, 1-kestose, inulin, and 1,1-nystose. This Arabidopsis thaliana (Mouse-ear cress) protein is Beta-fructofuranosidase, insoluble isoenzyme CWINV6 (CWINV6).